The chain runs to 93 residues: MTRKKTNPFVARHLLAKIEKVNMKEEKEIIVTWSRASSILPAMVGHTIAIHNGKEHIPIYITNPMVGRKLGEFVPTRHFTSYESTRKDTKSRR.

This sequence belongs to the universal ribosomal protein uS19 family.

It is found in the plastid. Its subcellular location is the chloroplast. In terms of biological role, protein S19 forms a complex with S13 that binds strongly to the 16S ribosomal RNA. This chain is Small ribosomal subunit protein uS19c (rps19-A), found in Zea mays (Maize).